A 421-amino-acid polypeptide reads, in one-letter code: UDP-N-acetylglucosamine 1-carboxyvinyltransferase 1 (421 aa).

Position 22-23 (22-23) interacts with phosphoenolpyruvate; that stretch reads KN. Position 95 (R95) interacts with UDP-N-acetyl-alpha-D-glucosamine. The active-site Proton donor is the C119. 2-(S-cysteinyl)pyruvic acid O-phosphothioketal is present on C119. UDP-N-acetyl-alpha-D-glucosamine contacts are provided by residues 124 to 128, D308, and V330; that span reads RPIEQ.

The protein belongs to the EPSP synthase family. MurA subfamily.

The protein resides in the cytoplasm. It catalyses the reaction phosphoenolpyruvate + UDP-N-acetyl-alpha-D-glucosamine = UDP-N-acetyl-3-O-(1-carboxyvinyl)-alpha-D-glucosamine + phosphate. Its pathway is cell wall biogenesis; peptidoglycan biosynthesis. Functionally, cell wall formation. Adds enolpyruvyl to UDP-N-acetylglucosamine. In Staphylococcus aureus (strain MRSA252), this protein is UDP-N-acetylglucosamine 1-carboxyvinyltransferase 1.